The primary structure comprises 84 residues: Omega-theraphotoxin-Pm1a (84 aa).

The N-terminal stretch at 1-21 (MKTSMLAVFVALPLAFVLTAA) is a signal peptide. The propeptide occupies 22–45 (TEERAHPNELVNSLVELVKLDAER). Disulfide bonds link cysteine 52–cysteine 66, cysteine 59–cysteine 71, and cysteine 65–cysteine 78.

This sequence belongs to the neurotoxin 10 (Hwtx-1) family. 41 (Jztx-36) subfamily. Expressed by the venom gland.

Its subcellular location is the secreted. In terms of biological role, omega-conotoxins act at presynaptic membranes, they bind and block voltage-gated calcium channels (Cav). This toxin inhibits barium currents (IBa) mediated by L-type voltage-gated calcium channels Cav1.2/CACNA1C (IC(50)=825 nM) and Cav1.3/CACNA1C (IC(50)=2240 nM). This Pelinobius muticus (King baboon spider) protein is Omega-theraphotoxin-Pm1a.